A 314-amino-acid polypeptide reads, in one-letter code: Ficolin-2 (314 aa).

The N-terminal stretch at 1–17 (MALGSAALFVLTLTVHA) is a signal peptide. Residues 40-96 (GCPGLPGAAGPKGEAGAKGDRGESGLPGIPGKEGPTGPKGNQGEKGIRGEKGDSGPS) form the Collagen-like domain. Residues 49-101 (GPKGEAGAKGDRGESGLPGIPGKEGPTGPKGNQGEKGIRGEKGDSGPSQSCAT) are disordered. A Fibrinogen C-terminal domain is found at 97–314 (QSCATGPRTC…KVSEMKVRLI (218 aa)). Disulfide bonds link cysteine 99/cysteine 127 and cysteine 106/cysteine 134. Residues aspartate 250, aspartate 252, serine 254, and serine 256 each coordinate Ca(2+). Cysteine 258 and cysteine 271 are disulfide-bonded. The N-linked (GlcNAc...) asparagine glycan is linked to asparagine 301.

It belongs to the ficolin lectin family. As to quaternary structure, homotrimer. Interacts with elastin. Interacts with MASP1 and MASP2.

The protein localises to the secreted. May function in innate immunity through activation of the lectin complement pathway. Calcium-dependent and GlcNAc-binding lectin. The protein is Ficolin-2 (Fcn2) of Mus musculus (Mouse).